Consider the following 446-residue polypeptide: Bifunctional protein GlmU (446 aa).

Residues 1–225 (MEGIILAAGK…ETEVYGVNDR (225 aa)) are pyrophosphorylase. Residues 6-9 (LAAG), K20, Q70, and 75-76 (GT) each bind UDP-N-acetyl-alpha-D-glucosamine. Position 98 (D98) interacts with Mg(2+). Residues G135, E150, N165, and N223 each contribute to the UDP-N-acetyl-alpha-D-glucosamine site. A Mg(2+)-binding site is contributed by N223. The interval 226-246 (VQLARLTKGVYRRKAEALMQE) is linker. The N-acetyltransferase stretch occupies residues 247–446 (GVTIIDPETV…RQVNKEDYVK (200 aa)). R328 and K346 together coordinate UDP-N-acetyl-alpha-D-glucosamine. Residue H358 is the Proton acceptor of the active site. UDP-N-acetyl-alpha-D-glucosamine is bound by residues Y361 and N372. Acetyl-CoA contacts are provided by residues A375, 381–382 (NY), S400, A418, and R435.

This sequence in the N-terminal section; belongs to the N-acetylglucosamine-1-phosphate uridyltransferase family. It in the C-terminal section; belongs to the transferase hexapeptide repeat family. In terms of assembly, homotrimer. Mg(2+) is required as a cofactor.

The protein localises to the cytoplasm. It carries out the reaction alpha-D-glucosamine 1-phosphate + acetyl-CoA = N-acetyl-alpha-D-glucosamine 1-phosphate + CoA + H(+). It catalyses the reaction N-acetyl-alpha-D-glucosamine 1-phosphate + UTP + H(+) = UDP-N-acetyl-alpha-D-glucosamine + diphosphate. Its pathway is nucleotide-sugar biosynthesis; UDP-N-acetyl-alpha-D-glucosamine biosynthesis; N-acetyl-alpha-D-glucosamine 1-phosphate from alpha-D-glucosamine 6-phosphate (route II): step 2/2. It participates in nucleotide-sugar biosynthesis; UDP-N-acetyl-alpha-D-glucosamine biosynthesis; UDP-N-acetyl-alpha-D-glucosamine from N-acetyl-alpha-D-glucosamine 1-phosphate: step 1/1. It functions in the pathway bacterial outer membrane biogenesis; LPS lipid A biosynthesis. In terms of biological role, catalyzes the last two sequential reactions in the de novo biosynthetic pathway for UDP-N-acetylglucosamine (UDP-GlcNAc). The C-terminal domain catalyzes the transfer of acetyl group from acetyl coenzyme A to glucosamine-1-phosphate (GlcN-1-P) to produce N-acetylglucosamine-1-phosphate (GlcNAc-1-P), which is converted into UDP-GlcNAc by the transfer of uridine 5-monophosphate (from uridine 5-triphosphate), a reaction catalyzed by the N-terminal domain. This is Bifunctional protein GlmU from Carboxydothermus hydrogenoformans (strain ATCC BAA-161 / DSM 6008 / Z-2901).